We begin with the raw amino-acid sequence, 929 residues long: Isoleucine--tRNA ligase (929 aa).

A 'HIGH' region motif is present at residues 57–67 (PYANGNIHVGH). An L-isoleucyl-5'-AMP-binding site is contributed by Glu-554. Positions 595-599 (KMSKS) match the 'KMSKS' region motif. An ATP-binding site is contributed by Lys-598. Zn(2+) is bound by residues Cys-888, Cys-891, Cys-908, and Cys-911.

It belongs to the class-I aminoacyl-tRNA synthetase family. IleS type 1 subfamily. Monomer. It depends on Zn(2+) as a cofactor.

It localises to the cytoplasm. The enzyme catalyses tRNA(Ile) + L-isoleucine + ATP = L-isoleucyl-tRNA(Ile) + AMP + diphosphate. Its function is as follows. Catalyzes the attachment of isoleucine to tRNA(Ile). As IleRS can inadvertently accommodate and process structurally similar amino acids such as valine, to avoid such errors it has two additional distinct tRNA(Ile)-dependent editing activities. One activity is designated as 'pretransfer' editing and involves the hydrolysis of activated Val-AMP. The other activity is designated 'posttransfer' editing and involves deacylation of mischarged Val-tRNA(Ile). In Streptococcus thermophilus (strain CNRZ 1066), this protein is Isoleucine--tRNA ligase.